We begin with the raw amino-acid sequence, 144 residues long: MKSYLAKPQEIERKWYVIDVAGKPLGRAASQIASILRGKNKPIYTPNVDTGDYVIVLNAEKVLLTGKKADQKMFRHHTLYPGGLKEMSYKDAIAKKADFVFYEAVRRMLPSGVLGRKMIKKLKVYKGEEHNNEAQKPEVLELKY.

The protein belongs to the universal ribosomal protein uL13 family. In terms of assembly, part of the 50S ribosomal subunit.

In terms of biological role, this protein is one of the early assembly proteins of the 50S ribosomal subunit, although it is not seen to bind rRNA by itself. It is important during the early stages of 50S assembly. The chain is Large ribosomal subunit protein uL13 from Clostridium acetobutylicum (strain ATCC 824 / DSM 792 / JCM 1419 / IAM 19013 / LMG 5710 / NBRC 13948 / NRRL B-527 / VKM B-1787 / 2291 / W).